We begin with the raw amino-acid sequence, 51 residues long: Epididymal sperm protein E (51 aa).

A zinc finger spans residues 8–39 (CVRCRRKTPSFNSKTVTFRNKRRAIRSHCAYC).

In terms of tissue distribution, sperm.

It is found in the nucleus. The sequence is that of Epididymal sperm protein E from Sepia officinalis (Common cuttlefish).